Reading from the N-terminus, the 410-residue chain is Cytochrome P450 CYP107DY1 (410 aa).

2 residues coordinate heme: His106 and Arg110. Substrate contacts are provided by Thr249 and Glu253. 3 residues coordinate heme: Arg302, His358, and Cys360.

It belongs to the cytochrome P450 family. Heme is required as a cofactor.

It carries out the reaction mevastatin + 2 reduced [2Fe-2S]-[ferredoxin] + O2 + 2 H(+) = pravastatin lactone + 2 oxidized [2Fe-2S]-[ferredoxin] + H2O. Its function is as follows. Cytochrome P450 whose physiological substrate is unknown. In vitro, is able to catalyze the selective hydroxylation of mevastatin to pravastatin, the widely used therapeutic agent for hypercholesterolemia. This chain is Cytochrome P450 CYP107DY1, found in Priestia megaterium (strain ATCC 12872 / QMB1551) (Bacillus megaterium).